The primary structure comprises 348 residues: N-(sulfonatooxy)prop-2-enimidothioate sulfolyase (348 aa).

Kelch repeat units lie at residues 1–33 (MARTLQGEWMKVEQKGGQVPAPRSSHGIAVIGD), 34–85 (KLYC…VAVG), 87–133 (KLYV…FHSM), 139–194 (HVYV…VVQG), 209–254 (KIPT…FAHA), 259–314 (YIII…ASTT), and 322–348 (GLLVHGGKLMTNERTDEMYFFAVNSST). A (Z)-N-(sulfonatooxy)alkanimidothioate-binding residues include Glu46, Arg94, Thr129, Phe130, and Arg157. Residue Arg94 is the Proton donor of the active site. Catalysis depends on Arg157, which acts as the Proton donor. The active-site Proton acceptor is the Glu220. Glu266 is a Fe(2+) binding site. A (Z)-N-(sulfonatooxy)alkanimidothioate is bound at residue Arg269. Fe(2+)-binding residues include Asp270 and His274. Residues Trp309 and Val310 each contribute to the a (Z)-N-(sulfonatooxy)alkanimidothioate site.

Homodimer. Requires Fe(2+) as cofactor. In terms of tissue distribution, expressed constitutively in roots, stems, leaves, flowers, siliques and seedlings.

The enzyme catalyses (Z)-N-(sulfonatooxy)prop-2-enimidothioate = allyl thiocyanate + sulfate. The catalysed reaction is (Z)-N-(sulfonatooxy)prop-2-enimidothioate = 2-(thiiran-2-yl)acetonitrile + sulfate. It carries out the reaction (Z)-N-(sulfonatooxy)prop-2-enimidothioate = allyl isothiocyanate + sulfate. It catalyses the reaction (Z)-phenyl-N-(sulfonatooxy)methanimidothioate = phenylacetonitrile + sulfur + sulfate. The enzyme catalyses glucoerucin + H2O = (Z)-4-methylsulfanylbutyl-N-(sulfonatooxy)methanimidothioate + D-glucose. The catalysed reaction is (Z)-4-methylsulfanylbutyl-N-(sulfonatooxy)methanimidothioate = 5-(methylsulfanyl)pentanenitrile + sulfur + sulfate + H(+). Stimulated by the presence of Fe(2+) leading to an increase formation of both thiocyanate and epithionitrile with allylglucosinolate as substrate in the presence of myrosinase. Repressed by EDTA. Its function is as follows. Specifier protein that contributes to constitutive and herbivore-induced simple nitrile formation. Catalyzes allylthiocyanate and corresponding epithionitrile formation from allylglucosinolate in the presence of myrosinase. Also converts aliphatic glucosinolates, such as indol-3-ylmethylglucosinolate, 4-methylsulfinylbutylglucosinolate, 4-methylthiobutyl- and benzylisothiocyanate, to simple nitriles. The sequence is that of N-(sulfonatooxy)prop-2-enimidothioate sulfolyase from Thlaspi arvense (Field penny-cress).